The following is a 405-amino-acid chain: Double C2-like domain-containing protein alpha (405 aa).

An interaction with UNC13D and DYNLT1 region spans residues 1–94; sequence MRGRRGDRMT…DSYDSDDTTA (94 aa). The disordered stretch occupies residues 34-54; the sequence is DYFPRRGPGPEGGGGGGGTGC. A compositionally biased stretch (gly residues) spans 42 to 54; it reads GPEGGGGGGGTGC. C2 domains are found at residues 94-216 and 256-389; these read ALGT…HFNI and ERGR…ERWH. Ca(2+)-binding residues include Asp125, Asp131, Asp186, Asp188, Asp287, Asp293, Asp347, Asp349, and Asp355. An interaction with UNC13D region spans residues 220 to 405; that stretch reads RQVPLPSPSS…PPAAGAYPLA (186 aa).

In terms of assembly, interacts (via N-terminus) with UNC13A. Interacts with cytoplasmic dynein light chain DYNLT1. Interacts with UNC13D. The cofactor is Ca(2+). As to expression, brain and mast cells.

It is found in the cytoplasmic vesicle. The protein localises to the secretory vesicle. Its subcellular location is the synaptic vesicle membrane. It localises to the synapse. The protein resides in the synaptosome. It is found in the lysosome. Functionally, calcium sensor which most probably regulates fusion of vesicles with membranes. Binds calcium and phospholipids. May be involved in calcium dependent neurotransmitter release through the interaction with UNC13A. May be involved in calcium-dependent spontaneous release of neurotransmitter in absence of action potentials in neuronal cells. Regulates Ca(2+)-dependent secretory lysosome exocytosis in mast cells. The chain is Double C2-like domain-containing protein alpha (Doc2a) from Mus musculus (Mouse).